The sequence spans 254 residues: Pimeloyl-[acyl-carrier protein] methyl ester esterase (254 aa).

The AB hydrolase-1 domain occupies 14–242 (LVLLHGWGMN…ASHAPFISHP (229 aa)). Substrate contacts are provided by residues Trp20, 82–83 (SL), and 143–147 (FLAIQ). Ser82 serves as the catalytic Nucleophile. Catalysis depends on residues Asp207 and His235. His235 serves as a coordination point for substrate.

The protein belongs to the AB hydrolase superfamily. Carboxylesterase BioH family. Monomer.

The protein localises to the cytoplasm. It carries out the reaction 6-carboxyhexanoyl-[ACP] methyl ester + H2O = 6-carboxyhexanoyl-[ACP] + methanol + H(+). The protein operates within cofactor biosynthesis; biotin biosynthesis. The physiological role of BioH is to remove the methyl group introduced by BioC when the pimeloyl moiety is complete. It allows to synthesize pimeloyl-ACP via the fatty acid synthetic pathway through the hydrolysis of the ester bonds of pimeloyl-ACP esters. The polypeptide is Pimeloyl-[acyl-carrier protein] methyl ester esterase (Aeromonas hydrophila subsp. hydrophila (strain ATCC 7966 / DSM 30187 / BCRC 13018 / CCUG 14551 / JCM 1027 / KCTC 2358 / NCIMB 9240 / NCTC 8049)).